We begin with the raw amino-acid sequence, 500 residues long: Intracellular exo-alpha-(1-&gt;5)-L-arabinofuranosidase 1 (500 aa).

Positions 27, 72, and 172 each coordinate alpha-L-arabinofuranose. Glutamate 173 serves as the catalytic Proton donor/acceptor. The alpha-L-arabinofuranose site is built by tyrosine 244, glutamate 292, and glutamine 349. Glutamate 292 (nucleophile) is an active-site residue.

It belongs to the glycosyl hydrolase 51 family. In terms of assembly, homohexamer; trimer of dimers.

Its subcellular location is the cytoplasm. The catalysed reaction is Hydrolysis of terminal non-reducing alpha-L-arabinofuranoside residues in alpha-L-arabinosides.. It catalyses the reaction (20S)-ginsenoside Rc + H2O = L-arabinofuranose + (20S)-ginsenoside Rd. It functions in the pathway glycan metabolism; L-arabinan degradation. Its activity is regulated as follows. At a concentration of 5 mM, K(+), Cu(2+) and Ni(2+) exhibit inhibitory effects on the activity. Additionally, the chemical reagent SDS also displays a certain degree of inhibition. Enzymatic activity is largely unaffected by product feedback inhibition. In terms of biological role, involved in the degradation of arabinan and is a key enzyme in the complete degradation of the plant cell wall. Catalyzes the cleavage of terminal alpha-(1-&gt;5)-arabinofuranosyl bonds in different hemicellulosic homopolysaccharides (branched and debranched arabinans). It acts preferentially on arabinotriose, arabinobiose and linear alpha-(1-&gt;5)-L-arabinan, and is much less effective on branched sugar beet arabinan. When expressed in E.coli, the recombinant enyzme can hydrolyze, with relatively low catalytic efficiency, the terminal alpha-L-arabinofuranoside at the C20 position of ginsenoside Rc to produce ginsenoside Rd, a rare ginsenoside that exhibits diverse and powerful pharmacological activities. The polypeptide is Intracellular exo-alpha-(1-&gt;5)-L-arabinofuranosidase 1 (Bacillus subtilis (strain 168)).